Reading from the N-terminus, the 450-residue chain is Glucose-6-phosphate isomerase (450 aa).

Thr-39 carries the phosphothreonine modification. Glu-291 (proton donor) is an active-site residue. Catalysis depends on residues His-312 and Lys-426.

Belongs to the GPI family.

The protein resides in the cytoplasm. The catalysed reaction is alpha-D-glucose 6-phosphate = beta-D-fructose 6-phosphate. The protein operates within carbohydrate biosynthesis; gluconeogenesis. It participates in carbohydrate degradation; glycolysis; D-glyceraldehyde 3-phosphate and glycerone phosphate from D-glucose: step 2/4. In terms of biological role, catalyzes the reversible isomerization of glucose-6-phosphate to fructose-6-phosphate. The sequence is that of Glucose-6-phosphate isomerase from Bacillus mycoides (strain KBAB4) (Bacillus weihenstephanensis).